The chain runs to 502 residues: UDP-N-acetylmuramoylalanine--D-glutamate ligase (502 aa).

129–135 (GTNGKTT) serves as a coordination point for ATP.

The protein belongs to the MurCDEF family.

Its subcellular location is the cytoplasm. The catalysed reaction is UDP-N-acetyl-alpha-D-muramoyl-L-alanine + D-glutamate + ATP = UDP-N-acetyl-alpha-D-muramoyl-L-alanyl-D-glutamate + ADP + phosphate + H(+). It functions in the pathway cell wall biogenesis; peptidoglycan biosynthesis. In terms of biological role, cell wall formation. Catalyzes the addition of glutamate to the nucleotide precursor UDP-N-acetylmuramoyl-L-alanine (UMA). This chain is UDP-N-acetylmuramoylalanine--D-glutamate ligase, found in Burkholderia ambifaria (strain MC40-6).